An 88-amino-acid chain; its full sequence is Small ribosomal subunit protein bS20 (88 aa).

The span at 1–11 (MANIKSSEKDI) shows a compositional bias: basic and acidic residues. 2 disordered regions span residues 1–31 (MANIKSSEKDIRRTKRRNAANSQNRSRLRTQ) and 69–88 (SKNADRKKSRMAKRLNSSAA).

The protein belongs to the bacterial ribosomal protein bS20 family.

Its function is as follows. Binds directly to 16S ribosomal RNA. This chain is Small ribosomal subunit protein bS20, found in Leptospira interrogans serogroup Icterohaemorrhagiae serovar copenhageni (strain Fiocruz L1-130).